The chain runs to 503 residues: TGF-beta receptor type-1 (503 aa).

The signal sequence occupies residues 1 to 33 (MEAAVAAPRPRLLLLVLAAAAAAAAALLPGATA). The Extracellular segment spans residues 34-126 (LQCFCHLCTK…SSPGLGPVEL (93 aa)). Disulfide bonds link C36/C54, C38/C41, C48/C71, C86/C100, and C101/C106. N-linked (GlcNAc...) asparagine glycosylation is present at N45. Residues 127-147 (AAVIAGPVCFVCISLMLMVYI) traverse the membrane as a helical segment. Residues 148–503 (CHNRTVIHHR…QLSQQEGIKM (356 aa)) are Cytoplasmic-facing. S165 carries the post-translational modification Phosphoserine. The GS domain maps to 175 to 204 (TTLKDLIYDMTTSGSGSGLPLLVQRTIART). Phosphothreonine; by TGFBR2 is present on residues T185 and T186. A phosphoserine; by TGFBR2 mark is found at S187, S189, and S191. Residues 193-194 (LP) carry the FKBP1A-binding motif. The 291-residue stretch at 205–495 (IVLQESIGKG…LRIKKTLSQL (291 aa)) folds into the Protein kinase domain. Residues 211–219 (IGKGRFGEV) and K232 each bind ATP. K268 is covalently cross-linked (Glycyl lysine isopeptide (Lys-Gly) (interchain with G-Cter in ubiquitin)). Residue D333 is the Proton acceptor of the active site. K391 participates in a covalent cross-link: Glycyl lysine isopeptide (Lys-Gly) (interchain with G-Cter in SUMO).

The protein belongs to the protein kinase superfamily. TKL Ser/Thr protein kinase family. TGFB receptor subfamily. Homodimer; in the endoplasmic reticulum but also at the cell membrane. Heterohexamer; TGFB1, TGFB2 and TGFB3 homodimeric ligands assemble a functional receptor composed of two TGFBR1 and TGFBR2 heterodimers to form a ligand-receptor heterohexamer. The respective affinity of TGBRB1 and TGFBR2 for the ligands may modulate the kinetics of assembly of the receptor and may explain the different biological activities of TGFB1, TGFB2 and TGFB3. Component of a complex composed of TSC22D1 (via N-terminus), TGFBR1 and TGFBR2; the interaction between TSC22D1 and TGFBR1 is inhibited by SMAD7 and promoted by TGFB1. Interacts with CD109; inhibits TGF-beta receptor activation in keratinocytes. Interacts with RBPMS. Interacts (unphosphorylated) with FKBP1A; prevents TGFBR1 phosphorylation by TGFBR2 and stabilizes it in the inactive conformation. Interacts with SMAD2, SMAD3 and ZFYVE9; ZFYVE9 recruits SMAD2 and SMAD3 to the TGF-beta receptor. Interacts with TRAF6 and MAP3K7; induces MAP3K7 activation by TRAF6. Interacts with PARD6A; involved in TGF-beta induced epithelial to mesenchymal transition. Interacts with NEDD4L. Interacts with SMAD7, SMURF1 and SMURF2; SMAD7 recruits NEDD4L, SMURF1 and SMURF2 to the TGF-beta receptor. Interacts with USP15 and VPS39. Interacts with SDCBP (via C-terminus). Interacts with CAV1 and this interaction is impaired in the presence of SDCBP. Interacts with APPL1; interaction is TGF beta dependent; mediates trafficking of the TGFBR1 from the endosomes to the nucleus via microtubules in a TRAF6-dependent manner. Interacts with GPR50; this interaction promotes the constitutive activation of SMAD signaling pathway. Mg(2+) serves as cofactor. Requires Mn(2+) as cofactor. Post-translationally, phosphorylated at basal levels in the absence of ligand. Activated upon phosphorylation by TGFBR2, mainly in the GS domain. Phosphorylation in the GS domain abrogates FKBP1A-binding. In terms of processing, N-Glycosylated. Ubiquitinated; undergoes ubiquitination catalyzed by several E3 ubiquitin ligases including SMURF1, SMURF2 and NEDD4L2. Results in the proteasomal and/or lysosomal degradation of the receptor thereby negatively regulating its activity. Deubiquitinated by USP15, leading to stabilization of the protein and enhanced TGF-beta signal. Its ubiquitination and proteasome-mediated degradation is negatively regulated by SDCBP. Ubiquitinated by BFAR via'Lys-63'-linked ubiquitination at Lys-268, leading to TGF-beta signaling activation. In terms of tissue distribution, found in all tissues examined, most abundant in placenta and least abundant in brain and heart. Expressed in a variety of cancer cell lines.

The protein resides in the cell membrane. It is found in the cell junction. It localises to the tight junction. Its subcellular location is the cell surface. The protein localises to the membrane raft. The enzyme catalyses L-threonyl-[receptor-protein] + ATP = O-phospho-L-threonyl-[receptor-protein] + ADP + H(+). It carries out the reaction L-seryl-[receptor-protein] + ATP = O-phospho-L-seryl-[receptor-protein] + ADP + H(+). Kept in an inactive conformation by FKBP1A preventing receptor activation in absence of ligand. CD109 is another inhibitor of the receptor. Its function is as follows. Transmembrane serine/threonine kinase forming with the TGF-beta type II serine/threonine kinase receptor, TGFBR2, the non-promiscuous receptor for the TGF-beta cytokines TGFB1, TGFB2 and TGFB3. Transduces the TGFB1, TGFB2 and TGFB3 signal from the cell surface to the cytoplasm and is thus regulating a plethora of physiological and pathological processes including cell cycle arrest in epithelial and hematopoietic cells, control of mesenchymal cell proliferation and differentiation, wound healing, extracellular matrix production, immunosuppression and carcinogenesis. The formation of the receptor complex composed of 2 TGFBR1 and 2 TGFBR2 molecules symmetrically bound to the cytokine dimer results in the phosphorylation and the activation of TGFBR1 by the constitutively active TGFBR2. Activated TGFBR1 phosphorylates SMAD2 which dissociates from the receptor and interacts with SMAD4. The SMAD2-SMAD4 complex is subsequently translocated to the nucleus where it modulates the transcription of the TGF-beta-regulated genes. This constitutes the canonical SMAD-dependent TGF-beta signaling cascade. Also involved in non-canonical, SMAD-independent TGF-beta signaling pathways. For instance, TGFBR1 induces TRAF6 autoubiquitination which in turn results in MAP3K7 ubiquitination and activation to trigger apoptosis. Also regulates epithelial to mesenchymal transition through a SMAD-independent signaling pathway through PARD6A phosphorylation and activation. The sequence is that of TGF-beta receptor type-1 (TGFBR1) from Homo sapiens (Human).